A 61-amino-acid chain; its full sequence is Protein YncO (61 aa).

Residues 18–38 (HVFLYVFYIFLFLVLFIMTIY) form a helical membrane-spanning segment.

It is found in the cell inner membrane. The protein is Protein YncO of Escherichia coli (strain K12).